Here is a 120-residue protein sequence, read N- to C-terminus: SLVELGKMILQETGKNPVTSYGAYGCNCGVLGSGKPKDATDRCCYVHKCCYKKLTDCDPKKDRYSYSWKDKTIVCGENNSCLKELCECDKAVAICLRENLDTYNKKYNYLKPFCKKADPC.

Disulfide bonds link Cys-26–Cys-114, Cys-28–Cys-44, Cys-43–Cys-95, Cys-49–Cys-120, Cys-50–Cys-88, Cys-57–Cys-81, and Cys-75–Cys-86.

It belongs to the phospholipase A2 family. Group II subfamily. K49 sub-subfamily. In terms of assembly, monomer. As to expression, expressed by the venom gland.

It localises to the secreted. In terms of biological role, snake venom phospholipase A2 homolog that lacks enzymatic activity. Shows moderate cytotoxicity against C2C12 myotubes (activity above 200 ug/mL). Also shows antibacterial activity against both Gram-positive and Gram-negative bacteria. A model of myotoxic mechanism has been proposed: an apo Lys49-PLA2 is activated by the entrance of a hydrophobic molecule (e.g. fatty acid) at the hydrophobic channel of the protein leading to a reorientation of a monomer. This reorientation causes a transition between 'inactive' to 'active' states, causing alignment of C-terminal and membrane-docking sites (MDoS) side-by-side and putting the membrane-disruption sites (MDiS) in the same plane, exposed to solvent and in a symmetric position for both monomers. The MDoS region stabilizes the toxin on membrane by the interaction of charged residues with phospholipid head groups. Subsequently, the MDiS region destabilizes the membrane with penetration of hydrophobic residues. This insertion causes a disorganization of the membrane, allowing an uncontrolled influx of ions (i.e. calcium and sodium), and eventually triggering irreversible intracellular alterations and cell death. In Lachesis muta muta (Bushmaster), this protein is Basic phospholipase A2 homolog LmutTX.